The chain runs to 170 residues: Myosin regulatory light chain 2 (170 aa).

Positions 1 to 13 are enriched in basic residues; it reads MSKAAKKKSSKKR. Positions 1–22 are disordered; the sequence is MSKAAKKKSSKKRSGSEAAQFD. EF-hand domains follow at residues 24-59 and 93-128; these read KTIQ…MGQI and DPEA…KRGE. D37, N39, D41, and D48 together coordinate Ca(2+).

In terms of assembly, myosin is a hexamer of 2 heavy chains and 4 light chains (two regulatory light chains and two essential light chains).

The sequence is that of Myosin regulatory light chain 2 (mlc-2) from Caenorhabditis elegans.